Here is a 367-residue protein sequence, read N- to C-terminus: MKVLVTGGGTGGHIYPALAVINELKERNQIVDILYVGTSKGMEQEIIPNRGIDFAAITVRGLQRKINLEQVYFLRDFLKGLYQSYRLIKNFTPDVVIGTGGYVCGPVLMAASLMKIPTVLHEQNVIPGITNKFLSRFADYTCVSFPESKNYMTKAKKIITTGNPRAQEITSRDFSSVNKHLNLRSDLKTLLIVSGSRGAQKINETMINIIPELISKFPIQIIYVTGNNYYESIRSQILEYVDNSYQDRLKLHAYLSDLPAAISCADLVISRAGATTLAELTAAETPSILIPSPNVTNDHQRVNAKILGERGAAKVLTEDSLNEQEVIKSISSIINDEEVLFDMQRATKEISYPTAATEICKILESLI.

UDP-N-acetyl-alpha-D-glucosamine contacts are provided by residues 10 to 12 (TGG), Asn-124, Ser-196, and Gln-300.

The protein belongs to the glycosyltransferase 28 family. MurG subfamily.

It localises to the cell membrane. The enzyme catalyses di-trans,octa-cis-undecaprenyl diphospho-N-acetyl-alpha-D-muramoyl-L-alanyl-D-glutamyl-meso-2,6-diaminopimeloyl-D-alanyl-D-alanine + UDP-N-acetyl-alpha-D-glucosamine = di-trans,octa-cis-undecaprenyl diphospho-[N-acetyl-alpha-D-glucosaminyl-(1-&gt;4)]-N-acetyl-alpha-D-muramoyl-L-alanyl-D-glutamyl-meso-2,6-diaminopimeloyl-D-alanyl-D-alanine + UDP + H(+). Its pathway is cell wall biogenesis; peptidoglycan biosynthesis. Functionally, cell wall formation. Catalyzes the transfer of a GlcNAc subunit on undecaprenyl-pyrophosphoryl-MurNAc-pentapeptide (lipid intermediate I) to form undecaprenyl-pyrophosphoryl-MurNAc-(pentapeptide)GlcNAc (lipid intermediate II). This Natranaerobius thermophilus (strain ATCC BAA-1301 / DSM 18059 / JW/NM-WN-LF) protein is UDP-N-acetylglucosamine--N-acetylmuramyl-(pentapeptide) pyrophosphoryl-undecaprenol N-acetylglucosamine transferase.